We begin with the raw amino-acid sequence, 826 residues long: MERIKHAATNSSLDRDGMAAVVDMYATWCGYLRRCAMDPNASDESVDLADSGLVAALEAVQVWGERRFGSAFQGDPNYRLERIMIYHLTEKHGAIDEAREHWDKLAQKELLAHDYSFWLSYYMWEMNLLQSQKGTGRSPTPAPAARLSRTPSRPASILQRALQVSQLNWPERVIEIYVKHCNDFESSDVLQNALDEVHNLQRVIAQRRKDATAAQTAQAEAHARAYESQALEASAAAAEAQALGKQQTGDPQDDLNAGVKRKWEAIASGETPESATKKPKNEDIGVNAAAPNSDQKSQENQPAKRDRENTSVFVSNLPSDVTITKVRQYFREYGHVNNIQLKHEENGKSTVALVEFRSVEDAQTALIRDGKYFGDHTISVKEAAGITLYVTNFPPSTDDESLHRLFGKSSNIFGIRWPSLKYNAHRRFCYVSFRDAESAAKATGLHGKMLEGKYKLSVQYSDPAAKKAREGATDEGREVHIKNIPQEFDEKEIEQLVSKYGTVKRVRLLHNMAGRSRGSAFVDLETKDEAERVVAELDKVKLGTQILKVELSVSAKFKPSARETSVASESATCNGGQEAPDEAKGEAGNEARGNLHLRSFALLGIPDTVNITRVRSLAEPHGHITKLKLYPEHGGAIIEYEDETTAGKAQLALDSTQLEGHTLRVDAVPQLFKEKSGVRIDRVDIAKRRPPKPTADTTSATMGKKAAPTTAPALLPAFVRRPVLGGKGVKHGLGFSAISATTSTKKDGQPTATNGAATSSTSSDTAPKKSNADFRALFLAGKSSTDSKEKVSEEKSKASGAPASVDKPDSKPDDTKMEIDVVVNGH.

4 RRM domains span residues 310 to 385 (TSVF…EAAG), 386 to 463 (ITLY…YSDP), 477 to 554 (REVH…LSVS), and 598 to 670 (RSFA…AVPQ).

Its subcellular location is the nucleus. Functions as a recycling factor of the spliceosome, a machinery that forms on each precursor-messenger RNA (pre-mRNA) and catalyzes the removal of introns. Chaperones the re-annealing of U4 and U6 snRNAs (small nuclear RNAs) released from previous rounds of splicing, an initial step in reforming the U4/U6-U5 tri-snRNP (small nuclear ribonucleoprotein) that can reassemble into another spliceosome complex; this step involves binding U6 and facilitating the unwinding of the U6 internal stem loop, followed by base-pairing of U6 to U4. In Ophiostoma ulmi (Dutch elm disease fungus), this protein is U4/U6 snRNA-associated-splicing factor PRP24.